Here is a 473-residue protein sequence, read N- to C-terminus: Lactate utilization protein B (473 aa).

4Fe-4S ferredoxin-type domains follow at residues 302–332 (GSEFRSVLQCIRCAACVNVCPVYRHVGGHSY) and 351–380 (YDDYKELPYASSLCGACTEACPVKIPLHDL). Cys311, Cys314, Cys317, Cys321, Cys364, Cys367, and Cys371 together coordinate [4Fe-4S] cluster.

This sequence belongs to the LutB/YkgF family.

Is involved in L-lactate degradation and allows cells to grow with lactate as the sole carbon source. Has probably a role as an electron transporter during oxidation of L-lactate. This chain is Lactate utilization protein B, found in Bacillus cereus (strain G9842).